A 737-amino-acid chain; its full sequence is Aryl hydrocarbon receptor nuclear translocator 2 (737 aa).

A disordered region spans residues 1-73 (MATPAAVNPS…SRYDDDQIPG (73 aa)). Basic and acidic residues predominate over residues 64–73 (SRYDDDQIPG). Residues 78–131 (YARENHSEIERRRRNKMTQYITELSDMVPTCSALARKPDKLTILRMAVSHMKSM) form the bHLH domain. PAS domains are found at residues 149–221 (TEQE…ENSM) and 340–406 (SMDM…QVVK). The 44-residue stretch at 413-456 (SVMYRFRMKNREWMLIRTSSFTFQNPYSDEIEYIICTNTNVKQL) folds into the PAC domain. Disordered stretches follow at residues 525–556 (MMVPSSTSGGQQLYSQGSPFQPGHSGKSFSSS) and 588–721 (QVSW…TTNY). Polar residues-rich tracts occupy residues 528–543 (PSSTSGGQQLYSQGSP) and 588–626 (QVSWSGNRPPFSGQQIPAQSNKAQSSPFGIGSSHSYQAD). Low complexity predominate over residues 627–642 (PSSYSPLSSPATSSPS). Over residues 643-656 (GNAYSNLANRNTAF) the composition is skewed to polar residues. A compositionally biased stretch (low complexity) spans 659–688 (SGESSQSGGQFQGRPSEVWSQWQSQHHSQQ).

In terms of assembly, efficient DNA binding requires dimerization with another bHLH protein. Heterodimer with the aryl hydrocarbon receptor (AHR), SIM1 or HIF2A/EPAS-1. As to expression, isoform 1 and isoform 2 are most highly expressed in the brain, eye and skeletal muscle and to a lower degree in liver, heart, kidney and swim bladder. Isoform 3 is most highly expressed in the eye, forebrain, midbrain, hindbrain, skeletal muscle, gills and brain but is barely detectable in liver, heart, kidney and swim bladder. Before the pharyngula period isoform 3 is expressed throughout the entire embryo and during this period extensively in the brain and eye.

The protein localises to the nucleus. Its function is as follows. Transcription factor that plays a role in the development of the hypothalamo-pituitary axis. Specifically recognizes the xenobiotic response element (XRE). Isoform 1 acts as a transcriptional activator. Isoform 3 acts as a transcriptional repressor. The sequence is that of Aryl hydrocarbon receptor nuclear translocator 2 from Danio rerio (Zebrafish).